A 197-amino-acid chain; its full sequence is dTTP/UTP pyrophosphatase (197 aa).

Asp70 functions as the Proton acceptor in the catalytic mechanism.

This sequence belongs to the Maf family. YhdE subfamily. It depends on a divalent metal cation as a cofactor.

The protein resides in the cytoplasm. It carries out the reaction dTTP + H2O = dTMP + diphosphate + H(+). It catalyses the reaction UTP + H2O = UMP + diphosphate + H(+). In terms of biological role, nucleoside triphosphate pyrophosphatase that hydrolyzes dTTP and UTP. May have a dual role in cell division arrest and in preventing the incorporation of modified nucleotides into cellular nucleic acids. In Escherichia coli O6:K15:H31 (strain 536 / UPEC), this protein is dTTP/UTP pyrophosphatase (yceF2).